Consider the following 298-residue polypeptide: ATP phosphoribosyltransferase (298 aa).

The protein belongs to the ATP phosphoribosyltransferase family. Long subfamily. Requires Mg(2+) as cofactor.

It localises to the cytoplasm. It carries out the reaction 1-(5-phospho-beta-D-ribosyl)-ATP + diphosphate = 5-phospho-alpha-D-ribose 1-diphosphate + ATP. The protein operates within amino-acid biosynthesis; L-histidine biosynthesis; L-histidine from 5-phospho-alpha-D-ribose 1-diphosphate: step 1/9. Feedback inhibited by histidine. Functionally, catalyzes the condensation of ATP and 5-phosphoribose 1-diphosphate to form N'-(5'-phosphoribosyl)-ATP (PR-ATP). Has a crucial role in the pathway because the rate of histidine biosynthesis seems to be controlled primarily by regulation of HisG enzymatic activity. This chain is ATP phosphoribosyltransferase, found in Vibrio campbellii (strain ATCC BAA-1116).